The following is a 50-amino-acid chain: Insulin-1 (50 aa).

3 cysteine pairs are disulfide-bonded: Cys-7–Cys-36, Cys-19–Cys-49, and Cys-35–Cys-40.

The protein belongs to the insulin family. Heterodimer of a B chain and an A chain linked by two disulfide bonds.

The protein resides in the secreted. Functionally, insulin decreases blood glucose concentration. It increases cell permeability to monosaccharides, amino acids and fatty acids. It accelerates glycolysis, the pentose phosphate cycle, and glycogen synthesis in liver. The polypeptide is Insulin-1 (Thunnus orientalis (North Pacific bluefin tuna)).